Reading from the N-terminus, the 153-residue chain is Selenoprotein F (153 aa).

Residues 1-19 form the signal peptide; that stretch reads MAGEVYLLWLLPLLQGLAS. A non-standard amino acid (selenocysteine) is located at residue Sec84.

Belongs to the selenoprotein M/F family. As to expression, higher levels in polster, prechordal plate, axis, otic vesicle and somites. Lower levels in fin buds.

The protein resides in the endoplasmic reticulum lumen. Functionally, may be involved in redox reactions associated with the formation of disulfide bonds. May contribute to the quality control of protein folding in the endoplasmic reticulum. The chain is Selenoprotein F from Danio rerio (Zebrafish).